A 358-amino-acid chain; its full sequence is tRNA (guanine-N(7)-)-methyltransferase (358 aa).

The tract at residues 1–29 (MTPPPPKRQKRDEYRKATAEATSQSGASD) is disordered. S-adenosyl-L-methionine-binding positions include Gly99 and 122–123 (EI). The segment covering 151–186 (TATAASETPSQQQAQIDGKQANANAAADAASPAPST) has biased composition (low complexity). A disordered region spans residues 151–194 (TATAASETPSQQQAQIDGKQANANAAADAASPAPSTDTEHMPTT). Residues 209–210 (NT) and Cys229 contribute to the S-adenosyl-L-methionine site. The active site involves Asp232. Residue 330 to 332 (TEE) coordinates S-adenosyl-L-methionine.

Belongs to the class I-like SAM-binding methyltransferase superfamily. TrmB family. As to quaternary structure, forms a complex with trm82.

The protein resides in the nucleus. It carries out the reaction guanosine(46) in tRNA + S-adenosyl-L-methionine = N(7)-methylguanosine(46) in tRNA + S-adenosyl-L-homocysteine. It participates in tRNA modification; N(7)-methylguanine-tRNA biosynthesis. Functionally, catalyzes the formation of N(7)-methylguanine at position 46 (m7G46) in tRNA. This is tRNA (guanine-N(7)-)-methyltransferase (trm8) from Aspergillus fumigatus (strain ATCC MYA-4609 / CBS 101355 / FGSC A1100 / Af293) (Neosartorya fumigata).